A 128-amino-acid chain; its full sequence is MAYRKLGRTSSQRKAMLRDLTTDLLINESIVTTEARAKEIRKTVEKMITLGKRGDLHARRQAAAYVRNEIASENYDEASDKYTSTTALQKLFDDIAPRYAERNGGYTRILKTEPRRGDAAPMAIIELV.

Belongs to the bacterial ribosomal protein bL17 family. As to quaternary structure, part of the 50S ribosomal subunit. Contacts protein L32.

The polypeptide is Large ribosomal subunit protein bL17 (Streptococcus agalactiae serotype Ia (strain ATCC 27591 / A909 / CDC SS700)).